The following is a 98-amino-acid chain: Large ribosomal subunit protein eL21 (98 aa).

Basic residues predominate over residues 1–17 (MQRSRGFRSKSRRKMTK). The segment at 1 to 28 (MQRSRGFRSKSRRKMTKVVREGRSNPIT) is disordered.

It belongs to the eukaryotic ribosomal protein eL21 family.

This chain is Large ribosomal subunit protein eL21, found in Methanobrevibacter smithii (strain ATCC 35061 / DSM 861 / OCM 144 / PS).